A 333-amino-acid polypeptide reads, in one-letter code: MATIKDVAKMAGVSTTTVSHVINKTRFVAKETEQQVLQAIKNLNYSPSAVARSLKVNTTKSIGMIVTTCETPYFAEIIHSVEELCYRQGYSLFLCNTQNNPEKIKNHLDMLAKKRVDGLLVMCAEYTQNSLNLLAAFEDLPMVVMDWGPFNENTDLIQDNSFSGGYIATKYLIDNGHKDIAIISGELKKTTAVMRYQGFEKAMQEANLAINPDWIMEGFFEPEDGYECMNKILVQDKLPTAVFCCNDVMALGAISAIGEKSLKVPDDISVIGYDNIHASRFFSPPLTTIHQSKSRLGVQAINLLFKRISEKGKEHEIIEIYPELVIRKSVKTL.

The region spanning 2-56 is the HTH lacI-type domain; it reads ATIKDVAKMAGVSTTTVSHVINKTRFVAKETEQQVLQAIKNLNYSPSAVARSLKV. Residues 4-23 constitute a DNA-binding region (H-T-H motif); that stretch reads IKDVAKMAGVSTTTVSHVIN. A DNA-binding region spans residues 48-56; that stretch reads SAVARSLKV. Residues Tyr-73, Lys-189, Thr-191, Phe-220, and Asp-274 each contribute to the hypoxanthine site.

As to quaternary structure, homodimer.

The protein operates within purine metabolism; purine nucleotide biosynthesis [regulation]. Is the main repressor of the genes involved in the de novo synthesis of purine nucleotides, regulating purB, purC, purEK, purF, purHD, purL, purMN and guaBA expression. PurR is allosterically activated to bind its cognate DNA by binding the purine corepressors, hypoxanthine or guanine, thereby effecting transcription repression. The sequence is that of HTH-type transcriptional repressor PurR from Histophilus somni (strain 2336) (Haemophilus somnus).